The sequence spans 609 residues: Mitochondrial nucleoid-associated protein 1 (609 aa).

Over 1 to 554 (MSDNPPRMEV…CNTTIRKSGF (554 aa)) the chain is Extracellular. Disordered stretches follow at residues 133 to 163 (QEET…GESR) and 406 to 425 (SPEG…QASH). Positions 146 to 161 (TSPKRELAEDLPKSGE) are enriched in basic and acidic residues. The chain crosses the membrane as a helical span at residues 555–571 (GGITMLSTGYFVLCCSW). Residues 572–609 (SFRRLKKLCRPLPWKSTVPPSVGVAKTTGDCRSKTCLD) are Cytoplasmic-facing.

Its subcellular location is the mitochondrion inner membrane. The protein resides in the mitochondrion matrix. The protein localises to the mitochondrion nucleoid. Functionally, critical regulator of mitochondrial DNA (mtDNA) abundance. Binds dsDNA throughout the mitochondrial genome without sequence specificity and controls mtDNA copy number by promoting its replication. Also plays important roles in mitochondrial metabolism and cell proliferation. This Pongo abelii (Sumatran orangutan) protein is Mitochondrial nucleoid-associated protein 1.